Here is a 201-residue protein sequence, read N- to C-terminus: Small ribosomal subunit protein uS4 (201 aa).

One can recognise an S4 RNA-binding domain in the interval 92 to 155; sequence ARLDNVVFRL…KSLEVIANSL (64 aa).

This sequence belongs to the universal ribosomal protein uS4 family. Part of the 30S ribosomal subunit. Contacts protein S5. The interaction surface between S4 and S5 is involved in control of translational fidelity.

Functionally, one of the primary rRNA binding proteins, it binds directly to 16S rRNA where it nucleates assembly of the body of the 30S subunit. In terms of biological role, with S5 and S12 plays an important role in translational accuracy. This is Small ribosomal subunit protein uS4 from Phocaeicola vulgatus (strain ATCC 8482 / DSM 1447 / JCM 5826 / CCUG 4940 / NBRC 14291 / NCTC 11154) (Bacteroides vulgatus).